We begin with the raw amino-acid sequence, 481 residues long: Dual specificity protein kinase CLK4 (481 aa).

2 disordered regions span residues 1 to 46 (MRHS…CKPH) and 102 to 143 (SKSS…EDDE). Positions 8-24 (HCPDWDSRESWGHESYR) are enriched in basic and acidic residues. 2 stretches are compositionally biased toward basic residues: residues 25-34 (GSHKRKRRSH) and 106-136 (VRSRRSSPKRKRNRHCSSHQSRSKSHRRKRS). Phosphoserine is present on residues S136 and S138. A Protein kinase domain is found at 159–475 (YEIVDTLGEG…LDEALQHPFF (317 aa)). ATP is bound by residues 165-173 (LGEGAFGKV) and K189. D286 (proton acceptor) is an active-site residue.

This sequence belongs to the protein kinase superfamily. CMGC Ser/Thr protein kinase family. Lammer subfamily. In terms of assembly, interacts with UBL5. Post-translationally, autophosphorylates on all three types of residues. As to expression, expressed in liver, kidney, heart, muscle, brain and endothelial cells.

Its subcellular location is the nucleus. It catalyses the reaction L-seryl-[protein] + ATP = O-phospho-L-seryl-[protein] + ADP + H(+). The catalysed reaction is L-threonyl-[protein] + ATP = O-phospho-L-threonyl-[protein] + ADP + H(+). It carries out the reaction L-tyrosyl-[protein] + ATP = O-phospho-L-tyrosyl-[protein] + ADP + H(+). TG003 inhibits its kinase activity and affects the regulation of alternative splicing mediated by phosphorylation of SR proteins. Its function is as follows. Dual specificity kinase acting on both serine/threonine and tyrosine-containing substrates. Phosphorylates serine- and arginine-rich (SR) proteins of the spliceosomal complex and may be a constituent of a network of regulatory mechanisms that enable SR proteins to control RNA splicing. Phosphorylates SRSF1 and SRSF3. Required for the regulation of alternative splicing of MAPT/TAU. Regulates the alternative splicing of tissue factor (F3) pre-mRNA in endothelial cells. The polypeptide is Dual specificity protein kinase CLK4 (CLK4) (Homo sapiens (Human)).